Here is a 535-residue protein sequence, read N- to C-terminus: Ribonuclease Y (535 aa).

The helical transmembrane segment at 4–24 (IILLIVSALIGLILGYALISI) threads the bilayer. The interval 118-141 (ENLSSKEKVLDSKEQSLTDKSKHI) is disordered. The KH domain maps to 225-285 (TITSVHLPDD…IRREIARMTL (61 aa)). In terms of domain architecture, HD spans 351-444 (VLRHSVEVGK…VAAADALSSA (94 aa)).

Belongs to the RNase Y family.

It is found in the cell membrane. Functionally, endoribonuclease that initiates mRNA decay. The sequence is that of Ribonuclease Y from Streptococcus pyogenes serotype M1.